We begin with the raw amino-acid sequence, 304 residues long: Recombination-associated protein RdgC (304 aa).

Belongs to the RdgC family.

It is found in the cytoplasm. The protein localises to the nucleoid. Its function is as follows. May be involved in recombination. The sequence is that of Recombination-associated protein RdgC from Shewanella baltica (strain OS223).